Consider the following 206-residue polypeptide: Photosynthetic reaction center cytochrome c-551 (206 aa).

3 helical membrane-spanning segments follow: residues 10–30 (IALA…VSFL), 49–69 (FMGW…LGKM), and 76–96 (KWFL…FFSL). Residues Cys-152, Cys-155, His-156, and Met-182 each contribute to the heme site.

In terms of assembly, component of the photosynthetic reaction center. The reaction center interacts with the Fenna-Matthews-Olson (FMO, fmoA) complex. Post-translationally, binds 1 heme group per subunit.

It is found in the cell inner membrane. Functionally, monoheme cytochrome which is the immediate electron donor to P840 of the photosynthetic reaction center complex. This is Photosynthetic reaction center cytochrome c-551 (pscC) from Chlorobaculum parvum (strain DSM 263 / NCIMB 8327) (Chlorobium vibrioforme subsp. thiosulfatophilum).